Here is a 1816-residue protein sequence, read N- to C-terminus: Kinesin-like protein KIF1B (1816 aa).

N-acetylserine is present on serine 2. The region spanning 5–354 (SVKVAVRVRP…LRYADRAKQI (350 aa)) is the Kinesin motor domain. 97–104 (GQTGAGKS) is a binding site for ATP. An interaction with KIFBP region spans residues 270–350 (NINKSLTTLG…TLSTLRYADR (81 aa)). Residues 431-450 (FSTASMGSLTSSPSSCSLNS) form a disordered region. Residues 432–450 (STASMGSLTSSPSSCSLNS) show a composition bias toward low complexity. Residues 470–512 (GEEAIERLKESEKIIAELNETWEEKLRKTEAIRMEREALLAEM) are a coiled coil. An FHA domain is found at 556 to 612 (TRVGQADAERRQDIVLSGAHIKEEHCIFRSERNNTGEVIVTLEPCERSETYVNGKRV). A phosphothreonine mark is found at threonine 647 and threonine 652. Residues 672–731 (IDMKQEMEKRLQEMEILYKREKEEADLLLEQQRLDYESKLQALQKQVETRSLAAETTEEE) are a coiled coil. 5 positions are modified to phosphoserine: serine 1054, serine 1057, serine 1416, serine 1454, and serine 1487. The disordered stretch occupies residues 1550-1570 (STTTFESAITPSESSGYDSAD). Serine 1573, serine 1603, serine 1610, and serine 1613 each carry phosphoserine. Positions 1620 to 1637 (SVSSFSSSTLTPSSTCPS) are enriched in low complexity. Residues 1620-1659 (SVSSFSSSTLTPSSTCPSLVDSRSSSMDQKTPEANSRASS) form a disordered region. Over residues 1640–1659 (DSRSSSMDQKTPEANSRASS) the composition is skewed to polar residues. The PH domain occupies 1701-1799 (VVSKKGYLHF…WLYAFNPLLA (99 aa)).

The protein belongs to the TRAFAC class myosin-kinesin ATPase superfamily. Kinesin family. Unc-104 subfamily. In terms of assembly, monomer. Interacts with KIFBP; positively regulates KIF1B microtubule motor activity. Interacts (via C-terminus end of the kinesin-motor domain) with CHP1; the interaction occurs in a calcium-dependent manner. Interacts with MADD (via death domain); links this isoform of KIF1B to Rab3-carrying vesicles in anterograde synaptic vesicle transport. As to expression, expressed in the brain with lower expression in testis and liver (at protein level). Strongly expressed in the brain and ovary, with lower expression in lung, kidney, uterus, testis and liver. Isoform 2 is expressed in non-neuronal tissues.

Its subcellular location is the cytoplasm. It is found in the cytoskeleton. The protein localises to the cytoplasmic vesicle. The protein resides in the secretory vesicle. It localises to the synaptic vesicle membrane. Its subcellular location is the lysosome. It catalyses the reaction ATP + H2O + a kinesin associated with a microtubule at position (n) = ADP + phosphate a kinesin associated with a microtubule at position (n+1, toward the plus end).. Its function is as follows. Has a plus-end-directed microtubule motor activity and functions as a motor for transport of vesicles and organelles along microtubules. Functionally, has a plus-end-directed microtubule motor activity and functions as a motor for anterograde synaptic vesicle transport along axonal microtubules from the cell body to the presynapse in neuronal cells. Has a plus-end-directed microtubule motor activity and functions as a motor for the translocation of lysosomes from perinuclear regions to the cell periphery. The sequence is that of Kinesin-like protein KIF1B from Rattus norvegicus (Rat).